The following is a 126-amino-acid chain: Profilin-1B (126 aa).

An actin binding region spans residues 2-36 (SWQTYVDTNLVGTGAVTQAAILGLDGNTWATSAGF). An N6,N6,N6-trimethyllysine modification is found at Lys-104.

This sequence belongs to the profilin family. In terms of assembly, occurs in many kinds of cells as a complex with monomeric actin in a 1:1 ratio.

It localises to the cytoplasm. It is found in the cytoskeleton. Functionally, binds to actin and affects the structure of the cytoskeleton. At high concentrations, profilin prevents the polymerization of actin, whereas it enhances it at low concentrations. By binding to PIP2, it inhibits the formation of IP3 and DG. This Acanthamoeba castellanii (Amoeba) protein is Profilin-1B.